The sequence spans 291 residues: Transcription antitermination protein NusB (291 aa).

Belongs to the NusB family.

Involved in transcription antitermination. Required for transcription of ribosomal RNA (rRNA) genes. Binds specifically to the boxA antiterminator sequence of the ribosomal RNA (rrn) operons. The protein is Transcription antitermination protein NusB of Synechococcus sp. (strain JA-2-3B'a(2-13)) (Cyanobacteria bacterium Yellowstone B-Prime).